The sequence spans 161 residues: Lipoprotein signal peptidase (161 aa).

Transmembrane regions (helical) follow at residues 8–28 (LKYF…KYLA), 40–60 (ITSF…SLLS), 67–87 (QMIM…YLII), and 91–111 (ITEK…LGNF). Catalysis depends on residues D122 and D140. The helical transmembrane segment at 136–156 (FNIADSAITCGVVILIAASLF) threads the bilayer.

Belongs to the peptidase A8 family.

Its subcellular location is the cell inner membrane. It catalyses the reaction Release of signal peptides from bacterial membrane prolipoproteins. Hydrolyzes -Xaa-Yaa-Zaa-|-(S,diacylglyceryl)Cys-, in which Xaa is hydrophobic (preferably Leu), and Yaa (Ala or Ser) and Zaa (Gly or Ala) have small, neutral side chains.. The protein operates within protein modification; lipoprotein biosynthesis (signal peptide cleavage). Functionally, this protein specifically catalyzes the removal of signal peptides from prolipoproteins. This chain is Lipoprotein signal peptidase, found in Francisella tularensis subsp. novicida (strain U112).